The chain runs to 287 residues: Hydroxysteroid 11-beta-dehydrogenase 1-like protein (287 aa).

Residues 1 to 22 form the signal peptide; sequence MKLYAKLLLCSICVAFIAVRWS. NADP(+) contacts are provided by residues 40–66, 91–92, and 118–120; these read GASTGIGEQLAYHYARLGAQIVITARR, DM, and NHI. Residue Ser169 coordinates substrate. Tyr182 serves as the catalytic Proton acceptor. NADP(+) is bound by residues 182–186 and 215–221; these read YASTK and GLIDTDS.

This sequence belongs to the short-chain dehydrogenases/reductases (SDR) family.

The protein resides in the secreted. It carries out the reaction cortisone + NADPH + H(+) = cortisol + NADP(+). In terms of biological role, unidirectional NADP(+)-dependent cortisol dehydrogenase (in vitro). In Danio rerio (Zebrafish), this protein is Hydroxysteroid 11-beta-dehydrogenase 1-like protein (hsd11b1l).